The following is a 194-amino-acid chain: MTPSAAATGHEAADEQRLRELRGLTRQLPTGVAVVTAQDGEVAHGATVSTVSVLSQQPLRIGVSLRRGSYLTGLIRQRRVFALNVLSSRQSAVADWFANPERPRGWRQFDYVRWTAHPKAGMPVLEDALAQLHCRLTDLIPLGASDDLLVAEVLDGRGRNGRPLVNFNGRLHDVEFRGVVRVSRDQPSAVTSLE.

This sequence belongs to the non-flavoprotein flavin reductase family. As to quaternary structure, homodimer. It can form an isobutylamine N-hydroxylase two component enzyme system formed of a flavin reductase component (VlmR) and a monooxygenase component (VlmH).

The catalysed reaction is FADH2 + NADP(+) = FAD + NADPH + 2 H(+). It catalyses the reaction FMNH2 + NADP(+) = FMN + NADPH + 2 H(+). In terms of biological role, involved in the biosynthesis of the azoxy antibiotic valanimycin, which has an antitumor activity. Catalyzes the reduction of FAD/FMN to FADH(2)/FMNH(2) which are subsequently used for the hydroxylation of isobutylamine by the isobutylamine N-hydroxylase VlmH. It can reduce either FAD or flavin mononucleotide (FMN) but prefers FAD. The enzyme has a strong preference for NADPH as acceptor. The protein is NADPH-flavin oxidoreductase of Streptomyces viridifaciens.